We begin with the raw amino-acid sequence, 547 residues long: Putative cysteine ligase BshC (547 aa).

Residues asparagine 462–histidine 484 are a coiled coil.

Belongs to the BshC family.

Involved in bacillithiol (BSH) biosynthesis. May catalyze the last step of the pathway, the addition of cysteine to glucosamine malate (GlcN-Mal) to generate BSH. The sequence is that of Putative cysteine ligase BshC from Heliobacterium modesticaldum (strain ATCC 51547 / Ice1).